We begin with the raw amino-acid sequence, 467 residues long: Methionine aminopeptidase 2-1 (467 aa).

Positions 1 to 10 (MGSKSPDGHR) are enriched in basic and acidic residues. Positions 1-105 (MGSKSPDGHR…TPPRVSLPSI (105 aa)) are disordered. Acidic residues predominate over residues 43 to 55 (DGDDEDEDGDDDG). The segment covering 75 to 90 (KKRKRKSNKKKKKKTS) has biased composition (basic residues). Histidine 219 provides a ligand contact to substrate. 3 residues coordinate a divalent metal cation: aspartate 240, aspartate 251, and histidine 320. Residue histidine 328 coordinates substrate. A divalent metal cation is bound by residues glutamate 353 and glutamate 448.

Belongs to the peptidase M24A family. Methionine aminopeptidase eukaryotic type 2 subfamily. Requires Co(2+) as cofactor. The cofactor is Zn(2+). Mn(2+) serves as cofactor. It depends on Fe(2+) as a cofactor.

Its subcellular location is the cytoplasm. It catalyses the reaction Release of N-terminal amino acids, preferentially methionine, from peptides and arylamides.. Cotranslationally removes the N-terminal methionine from nascent proteins. The N-terminal methionine is often cleaved when the second residue in the primary sequence is small and uncharged (Met-Ala-, Cys, Gly, Pro, Ser, Thr, or Val). This is Methionine aminopeptidase 2-1 from Arthroderma gypseum (strain ATCC MYA-4604 / CBS 118893) (Microsporum gypseum).